Consider the following 229-residue polypeptide: Cytochrome b translational activator protein CBS1, mitochondrial (229 aa).

The N-terminal 25 residues, M1–T25, are a transit peptide targeting the mitochondrion.

The protein localises to the mitochondrion inner membrane. Functionally, mRNA-specific translational activator of cytochrome b. The cytochrome b (COB) leader RNA may represent the target sequence for CBS1 and CBS2, tethering the COB mRNA to the inner mitochondrial membrane, where cotranslational insertion of cytochrome b into the membrane can occur. The chain is Cytochrome b translational activator protein CBS1, mitochondrial (CBS1) from Saccharomyces cerevisiae (strain ATCC 204508 / S288c) (Baker's yeast).